The following is a 616-amino-acid chain: FAD-linked oxidoreductase cheF (616 aa).

The FAD-binding PCMH-type domain maps to 160 to 344 (NQGLVSPWYV…LSMTVRVEPA (185 aa)).

The protein belongs to the oxygen-dependent FAD-linked oxidoreductase family. It depends on FAD as a cofactor.

The protein operates within secondary metabolite biosynthesis. In terms of biological role, FAD-linked oxidoreductase; part of the gene cluster that mediates the biosynthesis of chaetoglobosin A which has a unique inhibitory activity against actin polymerization in mammalian cells. Chaetoglobosin A and its intermediates are involved in the morphological differentiation of C.globosum. The first step of the pathway is the synthesis of prochaetoglobosin I via condensation of one acetyl-CoA, 8 malonyl-CoA, and a L-tryptophan molecule by the PKS-NRPS hybrid synthetase cheA, followed by reduction of backbone double bond to install desired geometry by the enoyl reductase cheB. Further multiple oxidation steps performed by the cytochrome P450 monooxygenases cheE and cheG, as well as by the FAD-linked oxidoreductase cheF, lead to the formation of chaetoglobosin A. Depending on the order of action of these reductases, distinct intermediates can be identified. Within the pathway, the cytochrome P450 monooxygenase cheE catalyzes a stereospecific epoxidation on prochaetoglobosin I, cytoglobosin D, and chaetoglobosin J intermediates. The FAD-linked oxidoreductase cheF performs dehydrogenation of the C-20 hydroxyl groups in the 20-dihyrochaetoglobosin A and cytoglobosin D intermediates. Finally, the cytochrome P450 monooxygenase cheG can catalyze the stereospecific dihydroxylation of prochaetoglobosin I and prochaetoglobosin IV at C-19 and C-20, respectively. The Diels-Alderase cheD may play a role in the post-PKS-NRPS biosynthetic steps catalyzing Diels-Alder cyclization. This is FAD-linked oxidoreductase cheF from Chaetomium globosum (strain ATCC 6205 / CBS 148.51 / DSM 1962 / NBRC 6347 / NRRL 1970) (Soil fungus).